Reading from the N-terminus, the 399-residue chain is Chorismate synthase (399 aa).

NADP(+) is bound by residues R40 and R46. Residues 135-137, 256-257, G301, 316-320, and R342 each bind FMN; these read RAS, QA, and KPIAT.

Belongs to the chorismate synthase family. In terms of assembly, homotetramer. It depends on FMNH2 as a cofactor.

The enzyme catalyses 5-O-(1-carboxyvinyl)-3-phosphoshikimate = chorismate + phosphate. The protein operates within metabolic intermediate biosynthesis; chorismate biosynthesis; chorismate from D-erythrose 4-phosphate and phosphoenolpyruvate: step 7/7. In terms of biological role, catalyzes the anti-1,4-elimination of the C-3 phosphate and the C-6 proR hydrogen from 5-enolpyruvylshikimate-3-phosphate (EPSP) to yield chorismate, which is the branch point compound that serves as the starting substrate for the three terminal pathways of aromatic amino acid biosynthesis. This reaction introduces a second double bond into the aromatic ring system. The polypeptide is Chorismate synthase (Paenarthrobacter aurescens (strain TC1)).